We begin with the raw amino-acid sequence, 119 residues long: Protein TusC (119 aa).

It belongs to the DsrF/TusC family. Heterohexamer, formed by a dimer of trimers. The hexameric TusBCD complex contains 2 copies each of TusB, TusC and TusD. The TusBCD complex interacts with TusE.

The protein localises to the cytoplasm. Its function is as follows. Part of a sulfur-relay system required for 2-thiolation of 5-methylaminomethyl-2-thiouridine (mnm(5)s(2)U) at tRNA wobble positions. This is Protein TusC from Shigella boydii serotype 18 (strain CDC 3083-94 / BS512).